Reading from the N-terminus, the 313-residue chain is Aspartate carbamoyltransferase catalytic subunit (313 aa).

Positions 58 and 59 each coordinate carbamoyl phosphate. K86 lines the L-aspartate pocket. Residues R108, H136, and Q139 each coordinate carbamoyl phosphate. Residues R169 and R223 each coordinate L-aspartate. Positions 265 and 266 each coordinate carbamoyl phosphate.

Belongs to the aspartate/ornithine carbamoyltransferase superfamily. ATCase family. As to quaternary structure, heterododecamer (2C3:3R2) of six catalytic PyrB chains organized as two trimers (C3), and six regulatory PyrI chains organized as three dimers (R2).

It catalyses the reaction carbamoyl phosphate + L-aspartate = N-carbamoyl-L-aspartate + phosphate + H(+). The protein operates within pyrimidine metabolism; UMP biosynthesis via de novo pathway; (S)-dihydroorotate from bicarbonate: step 2/3. Catalyzes the condensation of carbamoyl phosphate and aspartate to form carbamoyl aspartate and inorganic phosphate, the committed step in the de novo pyrimidine nucleotide biosynthesis pathway. The sequence is that of Aspartate carbamoyltransferase catalytic subunit from Anaeromyxobacter dehalogenans (strain 2CP-C).